The primary structure comprises 207 residues: Putative threonylcarbamoyl-AMP synthase (207 aa).

A YrdC-like domain is found at 15–199 (EEERKKVLEF…KIISIREGVI (185 aa)).

Belongs to the SUA5 family.

Its subcellular location is the cytoplasm. The enzyme catalyses L-threonine + hydrogencarbonate + ATP = L-threonylcarbamoyladenylate + diphosphate + H2O. Required for the formation of a threonylcarbamoyl group on adenosine at position 37 (t(6)A37) in tRNAs that read codons beginning with adenine. Catalyzes the conversion of L-threonine, HCO(3)(-)/CO(2) and ATP to give threonylcarbamoyl-AMP (TC-AMP) as the acyladenylate intermediate, with the release of diphosphate. The chain is Putative threonylcarbamoyl-AMP synthase from Methanocaldococcus jannaschii (strain ATCC 43067 / DSM 2661 / JAL-1 / JCM 10045 / NBRC 100440) (Methanococcus jannaschii).